The sequence spans 422 residues: Glutamyl-tRNA reductase (422 aa).

Residues Thr-49–Arg-52, Ser-110, Glu-115–Gln-117, and Gln-121 each bind substrate. Cys-50 (nucleophile) is an active-site residue. Gly-190–Ile-195 contacts NADP(+).

This sequence belongs to the glutamyl-tRNA reductase family. Homodimer.

The catalysed reaction is (S)-4-amino-5-oxopentanoate + tRNA(Glu) + NADP(+) = L-glutamyl-tRNA(Glu) + NADPH + H(+). The protein operates within porphyrin-containing compound metabolism; protoporphyrin-IX biosynthesis; 5-aminolevulinate from L-glutamyl-tRNA(Glu): step 1/2. Catalyzes the NADPH-dependent reduction of glutamyl-tRNA(Glu) to glutamate 1-semialdehyde (GSA). The chain is Glutamyl-tRNA reductase from Colwellia psychrerythraea (strain 34H / ATCC BAA-681) (Vibrio psychroerythus).